The primary structure comprises 414 residues: Dothistromin biosynthesis peroxidase dotB (414 aa).

The first 18 residues, 1 to 18 (MHFFSAIVLTCLASTAVA), serve as a signal peptide directing secretion. Cys72 lines the heme pocket. 3 N-linked (GlcNAc...) asparagine glycosylation sites follow: Asn187, Asn241, and Asn328.

Belongs to the chloroperoxidase family. It depends on heme b as a cofactor.

The protein operates within mycotoxin biosynthesis. Its function is as follows. Peroxidase; part of the fragmented gene cluster that mediates the biosynthesis of dothistromin (DOTH), a polyketide toxin very similar in structure to the aflatoxin precursor, versicolorin B. The first step of the pathway is the conversion of acetate to norsolorinic acid (NOR) and requires the fatty acid synthase subunits hexA and hexB, as well as the polyketide synthase pksA. PksA combines a hexanoyl starter unit and 7 malonyl-CoA extender units to synthesize the precursor NOR. The hexanoyl starter unit is provided to the acyl-carrier protein (ACP) domain by the fungal fatty acid synthase hexA/hexB. The second step is the conversion of NOR to averantin (AVN) and requires the norsolorinic acid ketoreductase nor1, which catalyzes the dehydration of norsolorinic acid to form (1'S)-averantin. The cytochrome P450 monooxygenase avnA then catalyzes the hydroxylation of AVN to 5'hydroxyaverantin (HAVN). The next step is performed by adhA that transforms HAVN to averufin (AVF). Averufin might then be converted to hydroxyversicolorone by cypX and avfA. Hydroxyversicolorone is further converted versiconal hemiacetal acetate (VHA) by moxY. VHA is then the substrate for the versiconal hemiacetal acetate esterase est1 to yield versiconal (VAL). Versicolorin B synthase vbsA then converts VAL to versicolorin B (VERB) by closing the bisfuran ring. Then, the activity of the versicolorin B desaturase verB leads to versicolorin A (VERA). DotB, a predicted chloroperoxidase, may perform epoxidation of the A-ring of VERA. Alternatively, a cytochrome P450, such as cypX or avnA could catalyze this step. It is also possible that another, uncharacterized, cytochrome P450 enzyme is responsible for this step. Opening of the epoxide could potentially be achieved by the epoxide hydrolase epoA. However, epoA seems not to be required for DOTH biosynthesis, but other epoxide hydrolases may have the ability to complement this hydrolysis. Alternatively, opening of the epoxide ring could be achieved non-enzymatically. The next step is the deoxygenation of ring A to yield the 5,8-dihydroxyanthraquinone which is most likely catalyzed by the NADPH dehydrogenase encoded by ver1. The last stages of DOTH biosynthesis are proposed to involve hydroxylation of the bisfuran. OrdB and norB might have oxidative roles here. An alternative possibility is that cytochrome P450 monoogenases such as avnA and cypX might perform these steps in addition to previously proposed steps. The protein is Dothistromin biosynthesis peroxidase dotB of Dothistroma septosporum (Red band needle blight fungus).